A 637-amino-acid polypeptide reads, in one-letter code: 1-deoxy-D-xylulose-5-phosphate synthase (637 aa).

Thiamine diphosphate contacts are provided by residues His-88 and 129–131 (GHS). Asp-160 serves as a coordination point for Mg(2+). Residues 161–162 (GA), Asn-189, Phe-293, and Glu-370 contribute to the thiamine diphosphate site. Position 189 (Asn-189) interacts with Mg(2+).

It belongs to the transketolase family. DXPS subfamily. In terms of assembly, homodimer. It depends on Mg(2+) as a cofactor. Thiamine diphosphate is required as a cofactor.

It catalyses the reaction D-glyceraldehyde 3-phosphate + pyruvate + H(+) = 1-deoxy-D-xylulose 5-phosphate + CO2. Its pathway is metabolic intermediate biosynthesis; 1-deoxy-D-xylulose 5-phosphate biosynthesis; 1-deoxy-D-xylulose 5-phosphate from D-glyceraldehyde 3-phosphate and pyruvate: step 1/1. Functionally, catalyzes the acyloin condensation reaction between C atoms 2 and 3 of pyruvate and glyceraldehyde 3-phosphate to yield 1-deoxy-D-xylulose-5-phosphate (DXP). The polypeptide is 1-deoxy-D-xylulose-5-phosphate synthase (Acinetobacter baumannii (strain AYE)).